Here is a 347-residue protein sequence, read N- to C-terminus: Autoinducer 2 import system permease protein LsrC (347 aa).

A run of 9 helical transmembrane segments spans residues Leu-14–Val-34, Met-39–Leu-59, Gly-72–Cys-92, Leu-93–Leu-113, Ile-115–Trp-135, Val-155–Trp-175, Leu-213–Pro-233, Val-249–Ala-269, and Ile-284–Asp-304.

It belongs to the binding-protein-dependent transport system permease family. AraH/RbsC subfamily. In terms of assembly, the complex is composed of two ATP-binding proteins (LsrA), two transmembrane proteins (LsrC and LsrD) and a solute-binding protein (LsrB).

The protein localises to the cell inner membrane. Its function is as follows. Part of the ABC transporter complex LsrABCD involved in autoinducer 2 (AI-2) import. Probably responsible for the translocation of the substrate across the membrane. The chain is Autoinducer 2 import system permease protein LsrC (lsrC) from Salmonella typhi.